The sequence spans 104 residues: uncharacterized protein (104 aa).

The helical transmembrane segment at 80-98 (GSSLPLFDLVFILLSTFFL) threads the bilayer.

It is found in the membrane. This is an uncharacterized protein from Saccharomyces cerevisiae (strain ATCC 204508 / S288c) (Baker's yeast).